The sequence spans 62 residues: U-myrmeciitoxin(01)-Mg3a (62 aa).

A signal peptide spans 1–24 (MKTTVILLLAIAIIFAIMTTLTSA).

Expressed by the venom gland.

The protein localises to the secreted. Functionally, may have antimicrobial properties, like most ant linear peptides. This Myrmecia gulosa (Red bulldog ant) protein is U-myrmeciitoxin(01)-Mg3a.